Here is a 589-residue protein sequence, read N- to C-terminus: Kelch-like protein 25 (589 aa).

The BTB domain occupies 46–114; the sequence is TDVTLWAGNR…AYSSKIIINE (69 aa). The BACK domain occupies 149–250; the sequence is CLGMMILSDA…LPSELLKEAV (102 aa). 6 Kelch repeats span residues 296-340, 341-388, 389-444, 446-492, 493-538, and 539-585; these read TLLI…AIGC, KVYV…ELEN, CLYV…SAKL, LFAF…VLGS, QIFI…ASGN, and KVYV…STWK.

As to quaternary structure, component of the BCR(KLHL25) E3 ubiquitin ligase complex, at least composed of cul3, klhl25 and rbx1.

It functions in the pathway protein modification; protein ubiquitination. Functionally, substrate-specific adapter of a BCR (BTB-CUL3-RBX1) E3 ubiquitin ligase complex involved in various processes, such as translation homeostasis and lipid synthesis. The BCR(KLHL25) ubiquitin ligase complex acts by mediating ubiquitination of hypophosphorylated eif4ebp1 (4E-BP1): ubiquitination and subsequent degradation of hypophosphorylated EIF4EBP1 (4E-BP1) probably serves as a homeostatic mechanism to maintain translation and prevent eIF4E inhibition when eIF4E levels are low. The BCR(KLHL25) complex also acts as a regulator of lipid synthesis by mediating ubiquitination and degradation of ACLY, thereby inhibiting lipid synthesis. This is Kelch-like protein 25 from Xenopus tropicalis (Western clawed frog).